We begin with the raw amino-acid sequence, 87 residues long: U3-theraphotoxin-Hhn1e (87 aa).

The N-terminal stretch at Met-1–Ala-24 is a signal peptide. The propeptide occupies Ser-25–Arg-52. Intrachain disulfides connect Cys-54–Cys-67, Cys-61–Cys-72, and Cys-66–Cys-79.

This sequence belongs to the neurotoxin 10 (Hwtx-1) family. 51 (Hntx-8) subfamily. Hntx-8 sub-subfamily. Expressed by the venom gland.

It localises to the secreted. Ion channel inhibitor. This Cyriopagopus hainanus (Chinese bird spider) protein is U3-theraphotoxin-Hhn1e.